The chain runs to 549 residues: Pleckstrin homology domain-containing family A member 8 (549 aa).

One can recognise a PH domain in the interval 1 to 93 (MEGVLYKWTN…WLVALGTAKA (93 aa)). 2 disordered regions span residues 180–245 (NPDL…ENIS) and 257–312 (QNDL…QEVQ). The segment covering 203-219 (KSNDPKNLHPGETRKDL) has biased composition (basic and acidic residues). Positions 276–288 (EPVEEQQTDGSTE) are enriched in acidic residues. Residues 299 to 309 (EVSMSPTQNKQ) show a composition bias toward polar residues.

It localises to the cytoplasm. The protein resides in the golgi apparatus. The protein localises to the trans-Golgi network membrane. It is found in the membrane. Functionally, cargo transport protein that is required for apical transport from the trans-Golgi network (TGN) to the plasma membrane. The sequence is that of Pleckstrin homology domain-containing family A member 8 (plekha8) from Danio rerio (Zebrafish).